The primary structure comprises 303 residues: Bifunctional protein FolD 2 (303 aa).

NADP(+) is bound by residues G169 to S171, S194, and I235.

The protein belongs to the tetrahydrofolate dehydrogenase/cyclohydrolase family. Homodimer.

It catalyses the reaction (6R)-5,10-methylene-5,6,7,8-tetrahydrofolate + NADP(+) = (6R)-5,10-methenyltetrahydrofolate + NADPH. The catalysed reaction is (6R)-5,10-methenyltetrahydrofolate + H2O = (6R)-10-formyltetrahydrofolate + H(+). It participates in one-carbon metabolism; tetrahydrofolate interconversion. Its function is as follows. Catalyzes the oxidation of 5,10-methylenetetrahydrofolate to 5,10-methenyltetrahydrofolate and then the hydrolysis of 5,10-methenyltetrahydrofolate to 10-formyltetrahydrofolate. In Ectopseudomonas mendocina (strain ymp) (Pseudomonas mendocina), this protein is Bifunctional protein FolD 2.